Here is a 433-residue protein sequence, read N- to C-terminus: GTPase Obg (433 aa).

The region spanning 1 to 158 (MFVDQVKIYV…RNVILELKLL (158 aa)) is the Obg domain. An OBG-type G domain is found at 159–329 (ADVGLVGFPS…LLFAIADLLE (171 aa)). Residues 165-172 (GFPSVGKS), 190-194 (FTTLV), 212-215 (DLPG), 282-285 (NKMD), and 310-312 (SAA) contribute to the GTP site. 2 residues coordinate Mg(2+): S172 and T192. Positions 350–428 (KYEKEELPFT…LLDYEFEFVD (79 aa)) constitute an OCT domain.

The protein belongs to the TRAFAC class OBG-HflX-like GTPase superfamily. OBG GTPase family. In terms of assembly, monomer. It depends on Mg(2+) as a cofactor.

Its subcellular location is the cytoplasm. In terms of biological role, an essential GTPase which binds GTP, GDP and possibly (p)ppGpp with moderate affinity, with high nucleotide exchange rates and a fairly low GTP hydrolysis rate. Plays a role in control of the cell cycle, stress response, ribosome biogenesis and in those bacteria that undergo differentiation, in morphogenesis control. This chain is GTPase Obg, found in Geobacillus thermodenitrificans (strain NG80-2).